Here is a 425-residue protein sequence, read N- to C-terminus: Serine--tRNA ligase (425 aa).

An L-serine-binding site is contributed by 228–230 (TAE). 259-261 (RSE) lines the ATP pocket. Glutamate 282 provides a ligand contact to L-serine. 346 to 349 (EIAS) is a binding site for ATP. Serine 382 serves as a coordination point for L-serine.

The protein belongs to the class-II aminoacyl-tRNA synthetase family. Type-1 seryl-tRNA synthetase subfamily. Homodimer. The tRNA molecule binds across the dimer.

Its subcellular location is the cytoplasm. The enzyme catalyses tRNA(Ser) + L-serine + ATP = L-seryl-tRNA(Ser) + AMP + diphosphate + H(+). It catalyses the reaction tRNA(Sec) + L-serine + ATP = L-seryl-tRNA(Sec) + AMP + diphosphate + H(+). It participates in aminoacyl-tRNA biosynthesis; selenocysteinyl-tRNA(Sec) biosynthesis; L-seryl-tRNA(Sec) from L-serine and tRNA(Sec): step 1/1. Catalyzes the attachment of serine to tRNA(Ser). Is also able to aminoacylate tRNA(Sec) with serine, to form the misacylated tRNA L-seryl-tRNA(Sec), which will be further converted into selenocysteinyl-tRNA(Sec). The sequence is that of Serine--tRNA ligase from Rickettsia massiliae (strain Mtu5).